We begin with the raw amino-acid sequence, 135 residues long: Transcription antitermination protein NusB (135 aa).

This sequence belongs to the NusB family.

Its function is as follows. Involved in transcription antitermination. Required for transcription of ribosomal RNA (rRNA) genes. Binds specifically to the boxA antiterminator sequence of the ribosomal RNA (rrn) operons. The protein is Transcription antitermination protein NusB of Clostridium perfringens (strain SM101 / Type A).